A 492-amino-acid polypeptide reads, in one-letter code: AAA-ATPase At3g28520 (492 aa).

The chain crosses the membrane as a helical span at residues 7-25; the sequence is IWGFTSTTMASIMFLWPMY. 249–256 is an ATP binding site; sequence GPPGTGKS. 2 disordered regions span residues 313 to 334 and 462 to 492; these read KKKKEEDEDKEEKKEAENLKRV and KIEKEARKNKKKAEDNVKQEKQNKVKGMVTK. 2 stretches are compositionally biased toward basic and acidic residues: residues 323-332 and 462-484; these read EEKKEAENLK and KIEKEARKNKKKAEDNVKQEKQN.

The protein belongs to the AAA ATPase family. BCS1 subfamily. Mg(2+) is required as a cofactor.

The protein localises to the membrane. The enzyme catalyses ATP + H2O = ADP + phosphate + H(+). The chain is AAA-ATPase At3g28520 from Arabidopsis thaliana (Mouse-ear cress).